Reading from the N-terminus, the 368-residue chain is Endophilin-A2 (368 aa).

A membrane-binding amphipathic helix region spans residues 1 to 21 (MSVAGLKKQFYKASQLVSEKV). Residues 18 to 249 (SEKVGGAEGT…LKRRMREASS (232 aa)) enclose the BAR domain. Positions 60-87 (PNPASRAKLTMLNTVSKIRGQVKNPGYP) are required for dimerization upon membrane association. A coiled-coil region spans residues 145 to 250 (NLCEKDLKEI…KRRMREASSR (106 aa)). The interval 218-254 (LVDAQLDYHRQAVQILDELAEKLKRRMREASSRPKRE) is interaction with ARC. A disordered region spans residues 244-308 (MREASSRPKR…PSRSMPPLDQ (65 aa)). The segment covering 245–263 (REASSRPKREYKPKPREPF) has biased composition (basic and acidic residues). Phosphoserine is present on residues serine 288 and serine 292. Threonine 298 bears the Phosphothreonine mark. The 60-residue stretch at 306 to 365 (LDQPSCKALYDFEPENDGELGFHEGDVITLTNQIDENWYEGMLDGQSGFFPLSYVEVLVP) folds into the SH3 domain. Tyrosine 315 is modified (phosphotyrosine).

The protein belongs to the endophilin family. Interacts with ARC. Interacts with SYNJ1 and DNM1. Interacts with PDCD6IP. Interacts with BIN2. As to expression, ubiquitous. Higher expression in pancreas, placenta, prostate, testis and uterus.

It localises to the cytoplasm. It is found in the early endosome membrane. The protein localises to the cell projection. The protein resides in the podosome. Functionally, implicated in endocytosis. May recruit other proteins to membranes with high curvature. The polypeptide is Endophilin-A2 (SH3GL1) (Homo sapiens (Human)).